A 487-amino-acid chain; its full sequence is Glycogen synthase (487 aa).

An ADP-alpha-D-glucose-binding site is contributed by K20.

Belongs to the glycosyltransferase 1 family. Bacterial/plant glycogen synthase subfamily.

The catalysed reaction is [(1-&gt;4)-alpha-D-glucosyl](n) + ADP-alpha-D-glucose = [(1-&gt;4)-alpha-D-glucosyl](n+1) + ADP + H(+). It functions in the pathway glycan biosynthesis; glycogen biosynthesis. Functionally, synthesizes alpha-1,4-glucan chains using ADP-glucose. This chain is Glycogen synthase, found in Aliivibrio fischeri (strain MJ11) (Vibrio fischeri).